The following is a 132-amino-acid chain: UPF0299 membrane protein YohJ (132 aa).

Helical transmembrane passes span 8 to 28 (IWQY…GIFI), 31 to 51 (LLPV…VLLA), 63 to 83 (GCYL…VGVM), and 93 to 113 (FGPV…VVSW).

This sequence belongs to the UPF0299 family.

It is found in the cell inner membrane. This is UPF0299 membrane protein YohJ from Escherichia fergusonii (strain ATCC 35469 / DSM 13698 / CCUG 18766 / IAM 14443 / JCM 21226 / LMG 7866 / NBRC 102419 / NCTC 12128 / CDC 0568-73).